The sequence spans 103 residues: Integration host factor subunit beta (103 aa).

Residues 62–81 (RNPKTGESVALPGKHVPHFK) form a disordered region.

Belongs to the bacterial histone-like protein family. As to quaternary structure, heterodimer of an alpha and a beta chain.

In terms of biological role, this protein is one of the two subunits of integration host factor, a specific DNA-binding protein that functions in genetic recombination as well as in transcriptional and translational control. This is Integration host factor subunit beta from Xanthomonas axonopodis pv. citri (strain 306).